Consider the following 397-residue polypeptide: Exodeoxyribonuclease 7 large subunit (397 aa).

Belongs to the XseA family. As to quaternary structure, heterooligomer composed of large and small subunits.

It localises to the cytoplasm. It catalyses the reaction Exonucleolytic cleavage in either 5'- to 3'- or 3'- to 5'-direction to yield nucleoside 5'-phosphates.. In terms of biological role, bidirectionally degrades single-stranded DNA into large acid-insoluble oligonucleotides, which are then degraded further into small acid-soluble oligonucleotides. This chain is Exodeoxyribonuclease 7 large subunit, found in Anaplasma marginale (strain Florida).